The following is a 211-amino-acid chain: Thymidylate kinase (211 aa).

Residue 7-14 (GIDGCGKT) coordinates ATP.

Belongs to the thymidylate kinase family.

It catalyses the reaction dTMP + ATP = dTDP + ADP. Phosphorylation of dTMP to form dTDP in both de novo and salvage pathways of dTTP synthesis. This is Thymidylate kinase from Anaplasma marginale (strain Florida).